We begin with the raw amino-acid sequence, 316 residues long: Aspartate carbamoyltransferase catalytic subunit (316 aa).

The carbamoyl phosphate site is built by Arg-56 and Thr-57. L-aspartate is bound at residue Lys-84. The carbamoyl phosphate site is built by Arg-106, His-139, and Gln-142. L-aspartate-binding residues include Arg-172 and Arg-226. Residues Gly-267 and Pro-268 each coordinate carbamoyl phosphate.

This sequence belongs to the aspartate/ornithine carbamoyltransferase superfamily. ATCase family. In terms of assembly, heterododecamer (2C3:3R2) of six catalytic PyrB chains organized as two trimers (C3), and six regulatory PyrI chains organized as three dimers (R2).

The catalysed reaction is carbamoyl phosphate + L-aspartate = N-carbamoyl-L-aspartate + phosphate + H(+). It functions in the pathway pyrimidine metabolism; UMP biosynthesis via de novo pathway; (S)-dihydroorotate from bicarbonate: step 2/3. Its function is as follows. Catalyzes the condensation of carbamoyl phosphate and aspartate to form carbamoyl aspartate and inorganic phosphate, the committed step in the de novo pyrimidine nucleotide biosynthesis pathway. The sequence is that of Aspartate carbamoyltransferase catalytic subunit from Mycobacterium sp. (strain JLS).